The sequence spans 66 residues: Protein KleD (66 aa).

The H-T-H motif DNA-binding region spans 33-52; that stretch reads VAVRSGNEWQQVTKWVEPAR.

The sequence is that of Protein KleD (kleD) from Escherichia coli.